A 428-amino-acid chain; its full sequence is Enolase (428 aa).

Position 163 (Gln-163) interacts with (2R)-2-phosphoglycerate. Glu-205 (proton donor) is an active-site residue. Mg(2+) contacts are provided by Asp-242, Glu-285, and Asp-312. The (2R)-2-phosphoglycerate site is built by Lys-337, Arg-366, Ser-367, and Lys-388. The active-site Proton acceptor is the Lys-337.

This sequence belongs to the enolase family. Mg(2+) serves as cofactor.

It is found in the cytoplasm. The protein resides in the secreted. Its subcellular location is the cell surface. The catalysed reaction is (2R)-2-phosphoglycerate = phosphoenolpyruvate + H2O. It functions in the pathway carbohydrate degradation; glycolysis; pyruvate from D-glyceraldehyde 3-phosphate: step 4/5. Catalyzes the reversible conversion of 2-phosphoglycerate (2-PG) into phosphoenolpyruvate (PEP). It is essential for the degradation of carbohydrates via glycolysis. This is Enolase from Nitrosomonas europaea (strain ATCC 19718 / CIP 103999 / KCTC 2705 / NBRC 14298).